The sequence spans 603 residues: Sulfite reductase [NADPH] flavoprotein alpha-component (603 aa).

The Flavodoxin-like domain maps to 64–202 (ITLISASQTG…QAETWRAAIV (139 aa)). Residues 70–75 (SQTGNA), 117–120 (STQG), and 153–162 (LGDSSYEHFA) each bind FMN. Positions 236–452 (EAPLTAHLAL…IEHNDNFRLP (217 aa)) constitute an FAD-binding FR-type domain. Residues threonine 326, leucine 360, 390–393 (RLYS), 408–410 (TVG), tyrosine 414, and 423–426 (GGAS) each bind FAD. Residues 523-524 (SR), 529-533 (KIYVQ), and aspartate 565 each bind NADP(+). Residue tyrosine 603 participates in FAD binding.

The protein belongs to the NADPH-dependent sulphite reductase flavoprotein subunit CysJ family. In the N-terminal section; belongs to the flavodoxin family. It in the C-terminal section; belongs to the flavoprotein pyridine nucleotide cytochrome reductase family. As to quaternary structure, alpha(8)-beta(8). The alpha component is a flavoprotein, the beta component is a hemoprotein. The cofactor is FAD. FMN is required as a cofactor.

It carries out the reaction hydrogen sulfide + 3 NADP(+) + 3 H2O = sulfite + 3 NADPH + 4 H(+). It participates in sulfur metabolism; hydrogen sulfide biosynthesis; hydrogen sulfide from sulfite (NADPH route): step 1/1. Component of the sulfite reductase complex that catalyzes the 6-electron reduction of sulfite to sulfide. This is one of several activities required for the biosynthesis of L-cysteine from sulfate. The flavoprotein component catalyzes the electron flow from NADPH -&gt; FAD -&gt; FMN to the hemoprotein component. The polypeptide is Sulfite reductase [NADPH] flavoprotein alpha-component (Sodalis glossinidius (strain morsitans)).